The sequence spans 172 residues: Adrenodoxin homolog, mitochondrial (172 aa).

Residues 1–16 constitute a mitochondrion transit peptide; that stretch reads MLKIVTRAGHTARISN. In terms of domain architecture, 2Fe-2S ferredoxin-type spans 61 to 163; it reads LKITFILKDG…GIRVALPQMT (103 aa). Residues Cys98, Cys104, Cys107, and Cys144 each coordinate [2Fe-2S] cluster.

Belongs to the adrenodoxin/putidaredoxin family. In terms of assembly, interacts in its reduced state with the apo form of ISU1. [2Fe-2S] cluster serves as cofactor.

It is found in the mitochondrion matrix. Iron-sulfur protein that transfers electrons in a wide variety of metabolic reactions. Involved in heme A biosynthesis and in iron-sulfur cluster assembly. Transfers electrons from adrenodoxin reductase ARH1 to heme A synthase COX15, a heme protein that catalyzes the conversion of heme O to heme A. Required for the de novo synthesis of Fe-S clusters on iron sulfur cluster assembly protein ISU1. Interact in its reduced state with ISU1 to productively deliver electrons for Fe-S cluster synthesis. Essential for coenzyme Q biosynthesis. May transfer the electrons required for the hydroxylation reaction performed by COQ6. This is Adrenodoxin homolog, mitochondrial from Saccharomyces cerevisiae (strain ATCC 204508 / S288c) (Baker's yeast).